The sequence spans 88 residues: Small ribosomal subunit protein uS19 (88 aa).

The protein belongs to the universal ribosomal protein uS19 family.

Functionally, protein S19 forms a complex with S13 that binds strongly to the 16S ribosomal RNA. This chain is Small ribosomal subunit protein uS19, found in Chlamydia felis (strain Fe/C-56) (Chlamydophila felis).